Here is a 346-residue protein sequence, read N- to C-terminus: Phosphoribosylformylglycinamidine cyclo-ligase (346 aa).

This sequence belongs to the AIR synthase family.

The protein localises to the cytoplasm. It catalyses the reaction 2-formamido-N(1)-(5-O-phospho-beta-D-ribosyl)acetamidine + ATP = 5-amino-1-(5-phospho-beta-D-ribosyl)imidazole + ADP + phosphate + H(+). Its pathway is purine metabolism; IMP biosynthesis via de novo pathway; 5-amino-1-(5-phospho-D-ribosyl)imidazole from N(2)-formyl-N(1)-(5-phospho-D-ribosyl)glycinamide: step 2/2. The polypeptide is Phosphoribosylformylglycinamidine cyclo-ligase (Bacillus cereus (strain B4264)).